The following is a 132-amino-acid chain: Small ribosomal subunit protein uS8 (132 aa).

It belongs to the universal ribosomal protein uS8 family. As to quaternary structure, part of the 30S ribosomal subunit. Contacts proteins S5 and S12.

In terms of biological role, one of the primary rRNA binding proteins, it binds directly to 16S rRNA central domain where it helps coordinate assembly of the platform of the 30S subunit. This is Small ribosomal subunit protein uS8 from Geobacillus thermodenitrificans (strain NG80-2).